A 232-amino-acid chain; its full sequence is Ubiquinone biosynthesis O-methyltransferase (232 aa).

S-adenosyl-L-methionine is bound by residues Arg36, Gly55, Asp76, and Leu120.

It belongs to the methyltransferase superfamily. UbiG/COQ3 family.

The enzyme catalyses a 3-demethylubiquinol + S-adenosyl-L-methionine = a ubiquinol + S-adenosyl-L-homocysteine + H(+). It catalyses the reaction a 3-(all-trans-polyprenyl)benzene-1,2-diol + S-adenosyl-L-methionine = a 2-methoxy-6-(all-trans-polyprenyl)phenol + S-adenosyl-L-homocysteine + H(+). It functions in the pathway cofactor biosynthesis; ubiquinone biosynthesis. O-methyltransferase that catalyzes the 2 O-methylation steps in the ubiquinone biosynthetic pathway. In Pseudomonas fluorescens (strain ATCC BAA-477 / NRRL B-23932 / Pf-5), this protein is Ubiquinone biosynthesis O-methyltransferase.